Consider the following 974-residue polypeptide: MMGSMLFRKRTLVTRANFLLFRSFSVNVEKLSDASAEIAGILKQENWRDTLVSSNLSIEINPEVVLSVLRSKRVDDPSKLLSFFNWVDSQKVTEQKLDSFSFLALDLCNFGSFEKALSVVERMIERNWPVAEVWSSIVRCSQEFVGKSDDGVLFGILFDGYIAKGYIEEAVFVFSSSMGLELVPRLSRCKVLLDALLRWNRLDLFWDVYKGMVERNVVFDVKTYHMLIIAHCRAGNVQLGKDVLFKTEKEFRTATLNVDGALKLKESMICKGLVPLKYTYDVLIDGLCKIKRLEDAKSLLVEMDSLGVSLDNHTYSLLIDGLLKGRNADAAKGLVHEMVSHGINIKPYMYDCCICVMSKEGVMEKAKALFDGMIASGLIPQAQAYASLIEGYCREKNVRQGYELLVEMKKRNIVISPYTYGTVVKGMCSSGDLDGAYNIVKEMIASGCRPNVVIYTTLIKTFLQNSRFGDAMRVLKEMKEQGIAPDIFCYNSLIIGLSKAKRMDEARSFLVEMVENGLKPNAFTYGAFISGYIEASEFASADKYVKEMRECGVLPNKVLCTGLINEYCKKGKVIEACSAYRSMVDQGILGDAKTYTVLMNGLFKNDKVDDAEEIFREMRGKGIAPDVFSYGVLINGFSKLGNMQKASSIFDEMVEEGLTPNVIIYNMLLGGFCRSGEIEKAKELLDEMSVKGLHPNAVTYCTIIDGYCKSGDLAEAFRLFDEMKLKGLVPDSFVYTTLVDGCCRLNDVERAITIFGTNKKGCASSTAPFNALINWVFKFGKTELKTEVLNRLMDGSFDRFGKPNDVTYNIMIDYLCKEGNLEAAKELFHQMQNANLMPTVITYTSLLNGYDKMGRRAEMFPVFDEAIAAGIEPDHIMYSVIINAFLKEGMTTKALVLVDQMFAKNAVDDGCKLSISTCRALLSGFAKVGEMEVAEKVMENMVRLQYIPDSATVIELINESCISSNQRVEADAVP.

A mitochondrion-targeting transit peptide spans 1 to 31 (MMGSMLFRKRTLVTRANFLLFRSFSVNVEKL). PPR repeat units follow at residues 96 to 130 (KLDSFSFLALDLCNFGSFEKALSVVERMIERNWPV), 150 to 184 (DGVLFGILFDGYIAKGYIEEAVFVFSSSMGLELVP), 185 to 219 (RLSRCKVLLDALLRWNRLDLFWDVYKGMVERNVVF), 220 to 250 (DVKTYHMLIIAHCRAGNVQLGKDVLFKTEKE), 257 to 275 (NVDGALKLKESMICKGLVP), 276 to 310 (LKYTYDVLIDGLCKIKRLEDAKSLLVEMDSLGVSL), 311 to 345 (DNHTYSLLIDGLLKGRNADAAKGLVHEMVSHGINI), 346 to 380 (KPYMYDCCICVMSKEGVMEKAKALFDGMIASGLIP), 381 to 415 (QAQAYASLIEGYCREKNVRQGYELLVEMKKRNIVI), 416 to 450 (SPYTYGTVVKGMCSSGDLDGAYNIVKEMIASGCRP), 451 to 485 (NVVIYTTLIKTFLQNSRFGDAMRVLKEMKEQGIAP), 486 to 520 (DIFCYNSLIIGLSKAKRMDEARSFLVEMVENGLKP), 521 to 555 (NAFTYGAFISGYIEASEFASADKYVKEMRECGVLP), 556 to 590 (NKVLCTGLINEYCKKGKVIEACSAYRSMVDQGILG), 591 to 625 (DAKTYTVLMNGLFKNDKVDDAEEIFREMRGKGIAP), 626 to 660 (DVFSYGVLINGFSKLGNMQKASSIFDEMVEEGLTP), 661 to 695 (NVIIYNMLLGGFCRSGEIEKAKELLDEMSVKGLHP), 696 to 730 (NAVTYCTIIDGYCKSGDLAEAFRLFDEMKLKGLVP), 731 to 761 (DSFVYTTLVDGCCRLNDVERAITIFGTNKKG), 765 to 799 (STAPFNALINWVFKFGKTELKTEVLNRLMDGSFDR), 804 to 838 (NDVTYNIMIDYLCKEGNLEAAKELFHQMQNANLMP), 839 to 873 (TVITYTSLLNGYDKMGRRAEMFPVFDEAIAAGIEP), 874 to 908 (DHIMYSVIINAFLKEGMTTKALVLVDQMFAKNAVD), and 914 to 948 (SISTCRALLSGFAKVGEMEVAEKVMENMVRLQYIP).

This sequence belongs to the PPR family. P subfamily.

It localises to the mitochondrion. This Arabidopsis thaliana (Mouse-ear cress) protein is Pentatricopeptide repeat-containing protein At5g61990, mitochondrial.